The primary structure comprises 47 residues: Delta-stichotoxin-Hcr3a (47 aa).

Pro-3 carries the hydroxyproline modification. 3 cysteine pairs are disulfide-bonded: Cys-4–Cys-44, Cys-6–Cys-34, and Cys-27–Cys-45.

This sequence belongs to the sea anemone sodium channel inhibitory toxin family. Type I subfamily.

It localises to the secreted. It is found in the nematocyst. In terms of biological role, inhibits voltage-gated sodium channels (Nav). The sequence is that of Delta-stichotoxin-Hcr3a from Radianthus crispa (Leathery sea anemone).